The chain runs to 1482 residues: Chromosome partition protein MukB (1482 aa).

34–41 (GGNGAGKS) serves as a coordination point for ATP. Coiled coils occupy residues 326–472 (LEAD…QTAH), 507–602 (NQRH…RRAP), 780–805 (RAARENRIETLHAERESLSERFATLS), 832–1110 (DDPE…REQV), and 1209–1265 (VEAI…LQSV). A flexible hinge region spans residues 666–783 (PGGSEDPRLN…SLPLFGRAAR (118 aa)).

This sequence belongs to the SMC family. MukB subfamily. In terms of assembly, homodimerization via its hinge domain. Binds to DNA via its C-terminal region. Interacts, and probably forms a ternary complex, with MukE and MukF via its C-terminal region. The complex formation is stimulated by calcium or magnesium. Interacts with tubulin-related protein FtsZ.

The protein resides in the cytoplasm. Its subcellular location is the nucleoid. Plays a central role in chromosome condensation, segregation and cell cycle progression. Functions as a homodimer, which is essential for chromosome partition. Involved in negative DNA supercoiling in vivo, and by this means organize and compact chromosomes. May achieve or facilitate chromosome segregation by condensation DNA from both sides of a centrally located replisome during cell division. In Klebsiella pneumoniae subsp. pneumoniae (strain ATCC 700721 / MGH 78578), this protein is Chromosome partition protein MukB.